A 175-amino-acid chain; its full sequence is RNA pyrophosphohydrolase (175 aa).

The 144-residue stretch at 6–149 folds into the Nudix hydrolase domain; the sequence is GYRPNVGIVI…KRDVYRRVMK (144 aa). The Nudix box signature appears at 38–59; sequence GGINAGETAEQAMYRELFEEVG.

It belongs to the Nudix hydrolase family. RppH subfamily. Requires a divalent metal cation as cofactor.

Its function is as follows. Accelerates the degradation of transcripts by removing pyrophosphate from the 5'-end of triphosphorylated RNA, leading to a more labile monophosphorylated state that can stimulate subsequent ribonuclease cleavage. The protein is RNA pyrophosphohydrolase of Sodalis glossinidius (strain morsitans).